A 480-amino-acid polypeptide reads, in one-letter code: NADH-quinone oxidoreductase subunit N (480 aa).

13 consecutive transmembrane segments (helical) span residues 5–25 (NFLC…LFLY), 40–60 (IAIV…FTMY), 69–89 (ISSQ…FLVF), 110–130 (VIML…NFVM), 162–182 (YILT…FLYG), 204–224 (LGFV…PFHL), 237–257 (VTAY…IFVL), 266–286 (LIWN…GNLF), 296–316 (FFAF…IAGT), 324–344 (IFYT…IASV), 368–388 (AFVM…AGFF), 404–424 (ILVF…LLIV), and 450–470 (MVIC…YEYI).

This sequence belongs to the complex I subunit 2 family. NDH-1 is composed of 14 different subunits. Subunits NuoA, H, J, K, L, M, N constitute the membrane sector of the complex.

The protein resides in the cell inner membrane. It carries out the reaction a quinone + NADH + 5 H(+)(in) = a quinol + NAD(+) + 4 H(+)(out). In terms of biological role, NDH-1 shuttles electrons from NADH, via FMN and iron-sulfur (Fe-S) centers, to quinones in the respiratory chain. The immediate electron acceptor for the enzyme in this species is believed to be a menaquinone. Couples the redox reaction to proton translocation (for every two electrons transferred, four hydrogen ions are translocated across the cytoplasmic membrane), and thus conserves the redox energy in a proton gradient. The chain is NADH-quinone oxidoreductase subunit N from Azobacteroides pseudotrichonymphae genomovar. CFP2.